Reading from the N-terminus, the 120-residue chain is Cytochrome c-550 (120 aa).

A helical transmembrane segment spans residues Pro-5–Val-25. The Periplasmic segment spans residues Lys-26–Lys-120. Positions 60, 63, 64, and 99 each coordinate heme c.

Post-translationally, binds 1 heme c group covalently per subunit.

It is found in the cell membrane. In terms of biological role, not essential for growth on minimal or rich media. This is Cytochrome c-550 (cccA) from Bacillus subtilis (strain 168).